We begin with the raw amino-acid sequence, 582 residues long: MKRSMYAGRVREEHIGTTITLKGWVSRRRDLGGLIFIDLRDREGVMQLVINPEEVSSDVMATAERLRSEYVIEVEGFVEARQQANDKLATGMVELKVSALTILNTAKTTPFEIKDDVEVSDDTRLRYRYLDLRRPEMLENFKLRAKVTHSIRNYLDDLEFIDVETPMLTKSTPEGARDYLVPSRVSQGHFYALPQSPQITKQLLMNAGFDRYYQIVKCFRDEDLRGDRQPEFTQVDLETSFLSEQEIQDIVEGMIAKVMKETKEIDVTLPFPRMSYDVAMNSYGSDKPDTRFEMLLQDLTVTVNGIDFKVFSEAPAVKAIVVKGNADRYSRKDIDKLTEFAKQFGAKGLAWVKVTDGQLAGPVAKFLIAIETELSSQLKLAENDLVLFVADTLEVANNTLGALRNRIAKDLDMIDQSQFNFLWVVDWPMFEWSEEEGRYMSAHHPFTLPTPESAHELEGDLAKVRAIAYDIVLNGYELGGGSLRINQKEMQERMFKALGFTADEANDQFGFLLEAMDYGFPPHGGLAIGLDRFVMLLAGKGNIREVIAFPKNNKASDPMTQAPSLVSENQLEELSLQIESHD.

Glutamate 174 contributes to the L-aspartate binding site. The interval 198–201 (QITK) is aspartate. Arginine 220 lines the L-aspartate pocket. ATP is bound by residues 220–222 (RDE) and glutamine 229. Histidine 443 is an L-aspartate binding site. ATP is bound at residue glutamate 477. Arginine 484 contributes to the L-aspartate binding site. 529–532 (GLDR) serves as a coordination point for ATP.

The protein belongs to the class-II aminoacyl-tRNA synthetase family. Type 1 subfamily. Homodimer.

It localises to the cytoplasm. The enzyme catalyses tRNA(Asp) + L-aspartate + ATP = L-aspartyl-tRNA(Asp) + AMP + diphosphate. Catalyzes the attachment of L-aspartate to tRNA(Asp) in a two-step reaction: L-aspartate is first activated by ATP to form Asp-AMP and then transferred to the acceptor end of tRNA(Asp). The protein is Aspartate--tRNA ligase of Streptococcus pyogenes serotype M28 (strain MGAS6180).